A 267-amino-acid polypeptide reads, in one-letter code: Chlorophyll a-b binding protein 3B, chloroplastic (267 aa).

The N-terminal 34 residues, 1–34 (MAASTMALSSSTFAGKAVKLSPSSSEISGNGRIT), are a transit peptide targeting the chloroplast. The tract at residues 19-52 (KLSPSSSEISGNGRITMRKTAAKPKPASSGSPWX) is disordered. Residues 153–173 (LVHAQSILAIWACQVVLMGAV) traverse the membrane as a helical segment. Residues V154, S158, Q166, E174, R177, and L183 each contribute to the chlorophyll b site. The chlorophyll a site is built by K214, E215, N218, R220, Q232, H247, and A256. The helical transmembrane segment at 221-241 (LAMFSMFGFFVQAIVTGKGPL) threads the bilayer. F263 contacts chlorophyll b.

This sequence belongs to the light-harvesting chlorophyll a/b-binding (LHC) protein family. As to quaternary structure, the LHC complex consists of chlorophyll a-b binding proteins. Binds at least 14 chlorophylls (8 Chl-a and 6 Chl-b) and carotenoids such as lutein and neoxanthin. is required as a cofactor. Photoregulated by reversible phosphorylation of its threonine residues.

It is found in the plastid. The protein localises to the chloroplast thylakoid membrane. Functionally, the light-harvesting complex (LHC) functions as a light receptor, it captures and delivers excitation energy to photosystems with which it is closely associated. This Solanum lycopersicum (Tomato) protein is Chlorophyll a-b binding protein 3B, chloroplastic (CAB3B).